Consider the following 471-residue polypeptide: MIPVRGFEDKTVAVFGLGRTGLTAARALIAGGAKVALWDEKPASREAAAAEGFAVVDLQAADWSQFAALMLSPGVPLSHPKPHWTVEKARAAGVEVLGDVELFARTVNAAPAHKRPKIIAITGTNGKSTTTALIGHLCASAGRDTRVGGNIGLGVLGLEDMHGGAVYVLELSSYQLDLTSSLKPDAVVLLNISPDHLDRHGGMDGYIAAKRRIFLNQGKGDTAIIGVDDAWCQQICTEITAANRRTIWPISAGKAMGRGVYALQGVLYDATGERVVEVADILRARSLPGRHNWQNAAAAYAAARAIGISMQDAVDGLMTFPGLAHRMETVGKIGKVRFVNDSKATNADAARQAMSSYPKFYWIAGGVAKAGGIDDLKDLFPRIAKAYLIGEAAEPFSWTLAGKAECVLSGTLEKAVQQAYADAAASGEEAIVLLSPACASFDQFSDFEARGEAFRAAVNGLTAGGGKAAVA.

123-129 serves as a coordination point for ATP; the sequence is GTNGKST.

It belongs to the MurCDEF family.

Its subcellular location is the cytoplasm. It catalyses the reaction UDP-N-acetyl-alpha-D-muramoyl-L-alanine + D-glutamate + ATP = UDP-N-acetyl-alpha-D-muramoyl-L-alanyl-D-glutamate + ADP + phosphate + H(+). It participates in cell wall biogenesis; peptidoglycan biosynthesis. Functionally, cell wall formation. Catalyzes the addition of glutamate to the nucleotide precursor UDP-N-acetylmuramoyl-L-alanine (UMA). This Caulobacter vibrioides (strain ATCC 19089 / CIP 103742 / CB 15) (Caulobacter crescentus) protein is UDP-N-acetylmuramoylalanine--D-glutamate ligase.